The sequence spans 126 residues: MNNKYAEYLPIAIQLMVTLGFISVTLLSSWLLGPKVKSKKKLDAFESGLDPVGNARVQFSIKYFLVATLFVLFDVEVIFFYPWAVNFNYFAEAVNKWEGFVKMLLFMTSLLIGFIYVIKKKALDWE.

3 consecutive transmembrane segments (helical) span residues 11 to 31 (IAIQ…SSWL), 64 to 84 (FLVA…YPWA), and 98 to 118 (EGFV…IYVI).

It belongs to the complex I subunit 3 family. As to quaternary structure, NDH-1 is composed of 14 different subunits. Subunits NuoA, H, J, K, L, M, N constitute the membrane sector of the complex.

The protein localises to the cell inner membrane. The catalysed reaction is a quinone + NADH + 5 H(+)(in) = a quinol + NAD(+) + 4 H(+)(out). Functionally, NDH-1 shuttles electrons from NADH, via FMN and iron-sulfur (Fe-S) centers, to quinones in the respiratory chain. The immediate electron acceptor for the enzyme in this species is believed to be a menaquinone. Couples the redox reaction to proton translocation (for every two electrons transferred, four hydrogen ions are translocated across the cytoplasmic membrane), and thus conserves the redox energy in a proton gradient. The sequence is that of NADH-quinone oxidoreductase subunit A from Cytophaga hutchinsonii (strain ATCC 33406 / DSM 1761 / CIP 103989 / NBRC 15051 / NCIMB 9469 / D465).